Consider the following 299-residue polypeptide: HTH-type transcriptional regulator CrgA (299 aa).

The region spanning 1–60 is the HTH lysR-type domain; it reads MKTNSEELTVFVQVVESGSFSRAAEQLAMANSAVSRIVKRLEEKLGVNLLNRTTRQLSLT. Positions 20-39 form a DNA-binding region, H-T-H motif; it reads FSRAAEQLAMANSAVSRIVK.

This sequence belongs to the LysR transcriptional regulatory family. As to quaternary structure, forms oligomers. Oligomerization is required for DNA binding.

Its function is as follows. Involved in the regulation of bacterial adhesion to host epithelial cells. May play a central regulatory role in meningococcal adhesion, particularly in switching from initial adhesion to intimate adhesion by downregulating the bacterial surface structures that hinder this adhesion. During intimate adhesion, negatively regulates the expression of pilC1, encoding a pilus-associated protein, pilE, encoding the pilin, and sia genes, encoding the capsule. Also negatively regulates its own expression. May also regulate other genes that are involved in intimate adhesion. Binds specifically to the promoter region of pilC1 and crgA (both harboring a CREN element), and pilE and sia (both devoid of a CREN element). Acts through interaction with RNA polymerase (RNAP). Interaction with RNAP leads to the production of short abortive transcripts, suggesting that CrgA may act by preventing RNAP from clearing the promoter. The protein is HTH-type transcriptional regulator CrgA of Neisseria meningitidis serogroup C (strain 8013).